The primary structure comprises 412 residues: uncharacterized protein (412 aa).

His49 serves as a coordination point for Zn(2+). Residue Glu52 is the Proton acceptor of the active site. The Zn(2+) site is built by His53 and Glu129.

The protein belongs to the peptidase M16 family. Requires Zn(2+) as cofactor.

This is an uncharacterized protein from Rickettsia felis (strain ATCC VR-1525 / URRWXCal2) (Rickettsia azadi).